The following is an 838-amino-acid chain: Leucine--tRNA ligase 1 (838 aa).

The short motif at 40-51 (PYPSGAGLHVGH) is the 'HIGH' region element. Positions 608-612 (KMSKS) match the 'KMSKS' region motif. K611 lines the ATP pocket.

Belongs to the class-I aminoacyl-tRNA synthetase family.

The protein localises to the cytoplasm. The enzyme catalyses tRNA(Leu) + L-leucine + ATP = L-leucyl-tRNA(Leu) + AMP + diphosphate. The protein is Leucine--tRNA ligase 1 of Rhizobium johnstonii (strain DSM 114642 / LMG 32736 / 3841) (Rhizobium leguminosarum bv. viciae).